The sequence spans 567 residues: MRLSQFHLHTTKETPSDAELTSHRLMLRAGMIRKLASGLYTWSPLGLRVLRKVERIVREEMDRAGAVEFQIPTIQPKELWEQTGRWQKFGPQLLKIKDRKDQVFCYSPTAEEAACDFARSELSSYKQLPVNFYQVQTKFRDEIRPRFGVMRSREFLMKDAYSFHLHDECLVREYENMKSAYSRIFTRLGLDFRMVQADSGAIGGDASQEFHVIADSGEDALVFSTGSDYAANMEAAIAADPAPRAAASEAMRKVDTPTQKTCEDVAALLGIELQRTVKSVALIAGEGEAQQFVLVLVRGDHEVNEIKLAKVAGLDEQRFASEAEIAEYLGSVPGFLGPVAPAKAIRVVADREVAAMSDFVVGANEVGFHLAGVNWGRDLPEPEVADIRNVRAGDRALDGGELKIARGIEVGHVFQLGRKYAEALDATVLDENGKAAVMAMGCYGIGISRVVAAAIEQNHDDAGIIWPDAMAPWQVVVCVINPKGDAAVADAAASLLQELRDAGLDAALDDRGLRPGAMFADMELIGIPHRVVVSERGLGAGTYEYRSRRASEAESLDKATLLQRLQG.

Belongs to the class-II aminoacyl-tRNA synthetase family. ProS type 1 subfamily. In terms of assembly, homodimer.

It is found in the cytoplasm. The enzyme catalyses tRNA(Pro) + L-proline + ATP = L-prolyl-tRNA(Pro) + AMP + diphosphate. Its function is as follows. Catalyzes the attachment of proline to tRNA(Pro) in a two-step reaction: proline is first activated by ATP to form Pro-AMP and then transferred to the acceptor end of tRNA(Pro). As ProRS can inadvertently accommodate and process non-cognate amino acids such as alanine and cysteine, to avoid such errors it has two additional distinct editing activities against alanine. One activity is designated as 'pretransfer' editing and involves the tRNA(Pro)-independent hydrolysis of activated Ala-AMP. The other activity is designated 'posttransfer' editing and involves deacylation of mischarged Ala-tRNA(Pro). The misacylated Cys-tRNA(Pro) is not edited by ProRS. This chain is Proline--tRNA ligase, found in Stenotrophomonas maltophilia (strain K279a).